A 61-amino-acid polypeptide reads, in one-letter code: U-stichotoxin-Hcr1b (61 aa).

An N-terminal signal peptide occupies residues 1–19 (PILIFAFVMFAVMVNAKPS). The propeptide occupies 20 to 31 (IDDAEMKREPKP). 2 disulfide bridges follow: Cys38/Cys49 and Cys41/Cys56.

The protein belongs to the Hau1a/HC18/HC19 family.

It is found in the secreted. Its subcellular location is the nematocyst. Its function is as follows. Toxin that is lethal to crab. Does not produce the typical symptoms associated with sodium channel toxins in crabs, suggesting that it likely does not act on sodium channels. This is U-stichotoxin-Hcr1b from Radianthus crispa (Leathery sea anemone).